We begin with the raw amino-acid sequence, 196 residues long: 7-methyl-GTP pyrophosphatase (196 aa).

Asp72 acts as the Proton acceptor in catalysis.

This sequence belongs to the Maf family. YceF subfamily. A divalent metal cation is required as a cofactor.

Its subcellular location is the cytoplasm. It carries out the reaction N(7)-methyl-GTP + H2O = N(7)-methyl-GMP + diphosphate + H(+). Nucleoside triphosphate pyrophosphatase that hydrolyzes 7-methyl-GTP (m(7)GTP). May have a dual role in cell division arrest and in preventing the incorporation of modified nucleotides into cellular nucleic acids. The protein is 7-methyl-GTP pyrophosphatase of Neisseria meningitidis serogroup A / serotype 4A (strain DSM 15465 / Z2491).